A 275-amino-acid chain; its full sequence is Large ribosomal subunit protein uL2 (275 aa).

A disordered region spans residues 223–275 (VAMNPVDHPHGGGEGRTSGGRHPVSPWGQPTKGYKTRSNKRTDKYIVRRRNKK).

It belongs to the universal ribosomal protein uL2 family. In terms of assembly, part of the 50S ribosomal subunit. Forms a bridge to the 30S subunit in the 70S ribosome.

In terms of biological role, one of the primary rRNA binding proteins. Required for association of the 30S and 50S subunits to form the 70S ribosome, for tRNA binding and peptide bond formation. It has been suggested to have peptidyltransferase activity; this is somewhat controversial. Makes several contacts with the 16S rRNA in the 70S ribosome. The protein is Large ribosomal subunit protein uL2 of Shewanella halifaxensis (strain HAW-EB4).